A 506-amino-acid polypeptide reads, in one-letter code: Adenylosuccinate synthetase (506 aa).

Residues 35–41 and 63–65 contribute to the GTP site; these read GDEGKGK and GHT. Residue D36 is the Proton acceptor of the active site. Residues D36 and G63 each contribute to the Mg(2+) site. Residues 36 to 39, 61 to 64, T212, R226, N304, T319, and R383 each bind IMP; these read DEGK and NAGH. The active-site Proton donor is H64. Position 379–385 (379–385) interacts with substrate; the sequence is VTTKRKR. GTP-binding positions include R385, 411 to 413, and 494 to 496; these read KLD and GVG.

Belongs to the adenylosuccinate synthetase family. Homodimer. The cofactor is Mg(2+).

Its subcellular location is the cytoplasm. The enzyme catalyses IMP + L-aspartate + GTP = N(6)-(1,2-dicarboxyethyl)-AMP + GDP + phosphate + 2 H(+). Its pathway is purine metabolism; AMP biosynthesis via de novo pathway; AMP from IMP: step 1/2. In terms of biological role, plays an important role in the de novo pathway and in the salvage pathway of purine nucleotide biosynthesis. Catalyzes the first committed step in the biosynthesis of AMP from IMP. The polypeptide is Adenylosuccinate synthetase (Drosophila yakuba (Fruit fly)).